The primary structure comprises 128 residues: MWKFASIVVLVVCLAWAVYCEDQRPPSLKTRFGRSADEPESDNYVSNDIMEKRSAQRPPSLKTRFGRSEGAEVMEKRSAQRPPSLKTRFGRSVANPESDGYMRKRSAESEPFVTRIRHGRANKKRAAN.

Residues M1 to D22 form the signal peptide. Residue Q23 is modified to Pyrrolidone carboxylic acid. P26 carries the hydroxyproline; partial modification. The segment at S27–N128 is disordered. Residue F32 is modified to Phenylalanine amide. Positions S35–A55 are excised as a propeptide. The residue at position 56 (Q56) is a Pyrrolidone carboxylic acid. The residue at position 59 (P59) is a Hydroxyproline; partial. Residue F65 is modified to Phenylalanine amide. The span at G66–S78 shows a compositional bias: basic and acidic residues. A propeptide spanning residues S68–A79 is cleaved from the precursor. Q80 carries the pyrrolidone carboxylic acid modification. Hydroxyproline; partial is present on P83. Position 89 is a phenylalanine amide (F89). Positions S92 to N128 are excised as a propeptide. Residues R115–N128 are compositionally biased toward basic residues.

It belongs to the NPY family. Expressed in the brain, terminal ganglion, and midgut of adults: numerous neurosecretory cells and midgut endocrine cells. Expression is dynamic depending on reproductive cycle.

Its subcellular location is the secreted. Functionally, has a role in inhibiting host-seeking behavior during a reproductive cycle. This chain is Head peptide, found in Aedes aegypti (Yellowfever mosquito).